The sequence spans 505 residues: Lysine--tRNA ligase (505 aa).

Mg(2+) is bound by residues Glu-415 and Glu-422.

The protein belongs to the class-II aminoacyl-tRNA synthetase family. Homodimer. It depends on Mg(2+) as a cofactor.

The protein localises to the cytoplasm. The enzyme catalyses tRNA(Lys) + L-lysine + ATP = L-lysyl-tRNA(Lys) + AMP + diphosphate. This Xanthomonas campestris pv. campestris (strain 8004) protein is Lysine--tRNA ligase.